The primary structure comprises 478 residues: Vitronectin (478 aa).

Residues 1 to 19 (MAPLRPFFILALVAWVSLA) form the signal peptide. An SMB domain is found at 20–63 (DQESCKGRCTQGFMASKKCQCDELCTYYQSCCADYMEQCKPQVT). 7 cysteine pairs are disulfide-bonded: cysteine 24/cysteine 28, cysteine 24/cysteine 40, cysteine 28/cysteine 58, cysteine 38/cysteine 40, cysteine 38/cysteine 51, cysteine 44/cysteine 50, and cysteine 51/cysteine 58. Residues 64-66 (RGD) carry the Cell attachment site motif. Threonine 69 is modified (phosphothreonine). Tyrosine 75, tyrosine 78, and tyrosine 80 each carry sulfotyrosine. The segment at 82–153 (EEPKNNTNTG…QGTPEFPEEE (72 aa)) is disordered. N-linked (GlcNAc...) asparagine glycosylation is present at asparagine 86. Residues 86–99 (NNTNTGVQPENTSP) show a composition bias toward polar residues. A compositionally biased stretch (basic and acidic residues) spans 131 to 141 (EQQEEILRPDT). Hemopexin repeat units lie at residues 157–201 (GKPF…VWGI), 202–249 (EGPI…FSGI), and 250–304 (PDNV…FEHF). Residues asparagine 168 and asparagine 241 are each glycosylated (N-linked (GlcNAc...) asparagine). Sulfotyrosine is present on residues tyrosine 278 and tyrosine 281. A disulfide bond links cysteine 292 and cysteine 431. A phosphoserine mark is found at serine 311 and serine 362. A disordered region spans residues 359–395 (LSHSAQAKKQKSKRRSRKRYRSRRGRGHRRSQSSNSR). A compositionally biased stretch (basic residues) spans 364–389 (QAKKQKSKRRSRKRYRSRRGRGHRRS). Residues 366 to 399 (KKQKSKRRSRKRYRSRRGRGHRRSQSSNSRRSSR) form a heparin-binding region. Residue serine 398 is modified to Phosphoserine; by PKA. Sulfotyrosine occurs at positions 416, 419, and 421. The Hemopexin 4 repeat unit spans residues 420 to 473 (DYDMDWLVPATCEPIQSVYFFSGDKYYRVNLRTRRVDSVNPPYPRSIAQYWLGC).

Interacts with SERPINE1/PAI1, insulin and C1QBP. Post-translationally, sulfated on tyrosine residues. In terms of processing, N- and O-glycosylated. It has been suggested that the active SMB domain may be permitted considerable disulfide bond heterogeneity or variability, thus two alternate disulfide patterns based on 3D structures are described with 1 disulfide bond conserved in both. Plasma.

Its subcellular location is the secreted. The protein resides in the extracellular space. Vitronectin is a cell adhesion and spreading factor found in serum and tissues. Vitronectin interact with glycosaminoglycans and proteoglycans. Is recognized by certain members of the integrin family and serves as a cell-to-substrate adhesion molecule. Inhibitor of the membrane-damaging effect of the terminal cytolytic complement pathway. The polypeptide is Vitronectin (Vtn) (Mus musculus (Mouse)).